Reading from the N-terminus, the 319-residue chain is Lambda-crystallin homolog (319 aa).

Position 2 is an N-acetylalanine (Ala2). Position 3 is a phosphoserine (Ser3). NAD(+)-binding positions include 16-17 (VI), Asp36, Glu97, and Lys102. Phosphoserine is present on Ser111.

The protein belongs to the 3-hydroxyacyl-CoA dehydrogenase family. As to quaternary structure, homodimer. Widely expressed, with highest levels in liver and kidney.

It localises to the cytoplasm. The catalysed reaction is L-gulonate + NAD(+) = 3-dehydro-L-gulonate + NADH + H(+). Its activity is regulated as follows. Inhibited by malonate. Functionally, has high L-gulonate 3-dehydrogenase activity. It also exhibits low dehydrogenase activity toward L-3-hydroxybutyrate (HBA) and L-threonate. This Homo sapiens (Human) protein is Lambda-crystallin homolog (CRYL1).